Here is a 434-residue protein sequence, read N- to C-terminus: Trigger factor (434 aa).

The region spanning 160 to 245 is the PPIase FKBP-type domain; the sequence is GDKVKMNFVG…LTEVQAANLP (86 aa).

The protein belongs to the FKBP-type PPIase family. Tig subfamily.

It is found in the cytoplasm. The catalysed reaction is [protein]-peptidylproline (omega=180) = [protein]-peptidylproline (omega=0). Functionally, involved in protein export. Acts as a chaperone by maintaining the newly synthesized protein in an open conformation. Functions as a peptidyl-prolyl cis-trans isomerase. This Shewanella sp. (strain W3-18-1) protein is Trigger factor.